Here is a 605-residue protein sequence, read N- to C-terminus: Glucose-6-phosphate isomerase (605 aa).

Residue Glu410 is the Proton donor of the active site. Catalysis depends on residues His441 and Lys569.

It belongs to the GPI family.

The protein resides in the cytoplasm. It catalyses the reaction alpha-D-glucose 6-phosphate = beta-D-fructose 6-phosphate. Its pathway is carbohydrate degradation; glycolysis; D-glyceraldehyde 3-phosphate and glycerone phosphate from D-glucose: step 2/4. This chain is Glucose-6-phosphate isomerase (PGI), found in Leishmania mexicana.